A 229-amino-acid chain; its full sequence is Enolase-phosphatase E1 (229 aa).

Over residues 208 to 218 (DTQSTHRQVSS) the composition is skewed to polar residues. Residues 208–229 (DTQSTHRQVSSFDDIHPEQIPT) form a disordered region. Residues 220–229 (DDIHPEQIPT) are compositionally biased toward basic and acidic residues.

Belongs to the HAD-like hydrolase superfamily. MasA/MtnC family. As to quaternary structure, monomer. Requires Mg(2+) as cofactor.

The catalysed reaction is 5-methylsulfanyl-2,3-dioxopentyl phosphate + H2O = 1,2-dihydroxy-5-(methylsulfanyl)pent-1-en-3-one + phosphate. Its pathway is amino-acid biosynthesis; L-methionine biosynthesis via salvage pathway; L-methionine from S-methyl-5-thio-alpha-D-ribose 1-phosphate: step 3/6. The protein operates within amino-acid biosynthesis; L-methionine biosynthesis via salvage pathway; L-methionine from S-methyl-5-thio-alpha-D-ribose 1-phosphate: step 4/6. Functionally, bifunctional enzyme that catalyzes the enolization of 2,3-diketo-5-methylthiopentyl-1-phosphate (DK-MTP-1-P) into the intermediate 2-hydroxy-3-keto-5-methylthiopentenyl-1-phosphate (HK-MTPenyl-1-P), which is then dephosphorylated to form the acireductone 1,2-dihydroxy-3-keto-5-methylthiopentene (DHK-MTPene). This is Enolase-phosphatase E1 from Cronobacter sakazakii (strain ATCC BAA-894) (Enterobacter sakazakii).